The following is a 187-amino-acid chain: Elongation factor P (187 aa).

It belongs to the elongation factor P family.

The protein localises to the cytoplasm. It participates in protein biosynthesis; polypeptide chain elongation. Functionally, involved in peptide bond synthesis. Stimulates efficient translation and peptide-bond synthesis on native or reconstituted 70S ribosomes in vitro. Probably functions indirectly by altering the affinity of the ribosome for aminoacyl-tRNA, thus increasing their reactivity as acceptors for peptidyl transferase. This is Elongation factor P from Corynebacterium jeikeium (strain K411).